Consider the following 316-residue polypeptide: Pantothenate kinase (316 aa).

An ATP-binding site is contributed by 95–102 (GSVAVGKS).

Belongs to the prokaryotic pantothenate kinase family.

The protein resides in the cytoplasm. The enzyme catalyses (R)-pantothenate + ATP = (R)-4'-phosphopantothenate + ADP + H(+). It functions in the pathway cofactor biosynthesis; coenzyme A biosynthesis; CoA from (R)-pantothenate: step 1/5. The polypeptide is Pantothenate kinase (coaA) (Halalkalibacterium halodurans (strain ATCC BAA-125 / DSM 18197 / FERM 7344 / JCM 9153 / C-125) (Bacillus halodurans)).